The primary structure comprises 402 residues: MLSAKTIEIVKSTVPLLQEKGVEITTRFYQILFSEHPELLNIFNHTNQKKGRQQQALANAVYAAATYIDNLEAIIPVVKQIGHKHRSLGIKAEHYPIVGTCLLRAIKEVAGAPDEVLNAWGEAYGVIADAFISIEAEMYEEAAHKEGGWKDFRNFVIVKKVKESDVITSFYLKPEDGGKVSSFIPGQYVTIQINIEGETYTHNRQYSLSDAPGKEYYRISVKKEKGVDTPDGKVSNYLHGHVKEGDVLPVSAPAGDFVLNMDSTLPVVLISGGVGITPMMSMLNTLIEQDSKRNVYFVHAAINSNTHAMKEHVKAVENEYEQVKAYTCYSAPTEKDLEMKNFDKEGFIESEWLKTIIPTTEAEFYFCGPVAFMKHINAALTDLSVKQEHIHYEFFGPATSLQ.

The Globin domain occupies 1-136 (MLSAKTIEIV…IADAFISIEA (136 aa)). Position 85 (His85) interacts with heme b. Residues Tyr95 and Glu135 each act as charge relay system in the active site. The tract at residues 147–402 (GGWKDFRNFV…EFFGPATSLQ (256 aa)) is reductase. The region spanning 150–260 (KDFRNFVIVK…SAPAGDFVLN (111 aa)) is the FAD-binding FR-type domain. FAD-binding positions include Tyr188 and 204 to 207 (RQYS). 273–278 (GVGITP) serves as a coordination point for NADP(+). FAD is bound at residue 394-397 (FFGP).

This sequence belongs to the globin family. Two-domain flavohemoproteins subfamily. It in the C-terminal section; belongs to the flavoprotein pyridine nucleotide cytochrome reductase family. Requires heme b as cofactor. It depends on FAD as a cofactor.

The enzyme catalyses 2 nitric oxide + NADPH + 2 O2 = 2 nitrate + NADP(+) + H(+). It carries out the reaction 2 nitric oxide + NADH + 2 O2 = 2 nitrate + NAD(+) + H(+). Its function is as follows. Is involved in NO detoxification in an aerobic process, termed nitric oxide dioxygenase (NOD) reaction that utilizes O(2) and NAD(P)H to convert NO to nitrate, which protects the bacterium from various noxious nitrogen compounds. Therefore, plays a central role in the inducible response to nitrosative stress. This Bacillus cereus (strain ATCC 14579 / DSM 31 / CCUG 7414 / JCM 2152 / NBRC 15305 / NCIMB 9373 / NCTC 2599 / NRRL B-3711) protein is Flavohemoprotein.